The chain runs to 885 residues: Phycobiliprotein ApcE (885 aa).

C185 contacts (2R,3E)-phycocyanobilin. 3 PBS-linker domains span residues 242-422 (DVQG…FRKV), 498-680 (KSIG…NSKK), and 694-871 (NSIQ…KQSS).

This sequence belongs to the phycobilisome linker protein family. In terms of processing, contains one covalently linked bilin chromophore. This protein autochromophorylates (Potential).

Its subcellular location is the plastid. The protein localises to the chloroplast thylakoid membrane. This protein is postulated to act both as terminal energy acceptor and as a linker polypeptide that stabilizes the phycobilisome architecture. May have intrinsic bilin lyase activity. This chain is Phycobiliprotein ApcE (apcE), found in Aglaothamnion neglectum (Red alga).